Consider the following 1946-residue polypeptide: Integrin beta-like protein E (1946 aa).

An N-terminal signal peptide occupies residues 1-22; the sequence is MNNLFKFLFVLLAIFCPPISDL. Topologically, residues 23 to 1875 are extracellular; it reads VVSHGVPQQH…ATTQTTNNKT (1853 aa). N-linked (GlcNAc...) asparagine glycans are attached at residues asparagine 107, asparagine 134, and asparagine 203. Residues 423–460 enclose the EGF-like domain; the sequence is YGQNCDPTPPCDKGIPNEGILGDGKCMCINGYSGDKCD. 2 disulfide bridges follow: cysteine 433–cysteine 448 and cysteine 450–cysteine 459. Positions 514 to 699 constitute a VWFA domain; that stretch reads DVFVLVDVNV…AGLKSVLSNV (186 aa). Residues asparagine 705, asparagine 860, asparagine 1043, asparagine 1113, asparagine 1177, asparagine 1374, asparagine 1401, asparagine 1513, asparagine 1611, asparagine 1620, asparagine 1662, asparagine 1671, asparagine 1737, asparagine 1743, asparagine 1762, asparagine 1812, asparagine 1852, and asparagine 1873 are each glycosylated (N-linked (GlcNAc...) asparagine). Residues 1876–1896 form a helical membrane-spanning segment; it reads VLTGAIAGAAAGTALIAAAAW. Residues 1897 to 1946 are Cytoplasmic-facing; it reads KLLRKAAPPTDTFFSEAAFLGDGVNANPLYEQSASAAENPLYQSASDNTD.

This sequence belongs to the SIB family. Interacts with talA/talin.

It localises to the membrane. Its function is as follows. Implicated in cellular adhesion. In Dictyostelium discoideum (Social amoeba), this protein is Integrin beta-like protein E (sibE).